Here is a 970-residue protein sequence, read N- to C-terminus: uncharacterized protein (970 aa).

The chain crosses the membrane as a helical span at residues 12–32; it reads VIFFSVFFVIFFLFIESSVGF.

It to E.coli YtfN.

Its subcellular location is the membrane. This is an uncharacterized protein from Buchnera aphidicola subsp. Acyrthosiphon pisum (strain APS) (Acyrthosiphon pisum symbiotic bacterium).